The sequence spans 87 residues: Small ribosomal subunit protein bS20 (87 aa).

The segment covering Met-1–Ile-11 has biased composition (basic residues). The interval Met-1–His-23 is disordered.

Belongs to the bacterial ribosomal protein bS20 family.

Binds directly to 16S ribosomal RNA. The chain is Small ribosomal subunit protein bS20 from Geotalea uraniireducens (strain Rf4) (Geobacter uraniireducens).